The following is a 288-amino-acid chain: S-methyl-5'-thioadenosine phosphorylase (288 aa).

Residues Ser-12, 54–55 (RH), and 87–88 (SA) each bind phosphate. Residue Met-186 coordinates substrate. Thr-187 is a phosphate binding site. 210–212 (DYD) contributes to the substrate binding site.

Belongs to the PNP/MTAP phosphorylase family. MTAP subfamily. As to quaternary structure, homohexamer. Dimer of a homotrimer.

It catalyses the reaction S-methyl-5'-thioadenosine + phosphate = 5-(methylsulfanyl)-alpha-D-ribose 1-phosphate + adenine. It participates in amino-acid biosynthesis; L-methionine biosynthesis via salvage pathway; S-methyl-5-thio-alpha-D-ribose 1-phosphate from S-methyl-5'-thioadenosine (phosphorylase route): step 1/1. In terms of biological role, catalyzes the reversible phosphorylation of S-methyl-5'-thioadenosine (MTA) to adenine and 5-methylthioribose-1-phosphate. Involved in the breakdown of MTA, a major by-product of polyamine biosynthesis. Responsible for the first step in the methionine salvage pathway after MTA has been generated from S-adenosylmethionine. Has broad substrate specificity with 6-aminopurine nucleosides as preferred substrates. This chain is S-methyl-5'-thioadenosine phosphorylase, found in Chloroflexus aurantiacus (strain ATCC 29366 / DSM 635 / J-10-fl).